The sequence spans 279 residues: Pantothenate synthetase (279 aa).

Residue 26 to 33 (MGNLHEGH) participates in ATP binding. Histidine 33 acts as the Proton donor in catalysis. Glutamine 57 lines the (R)-pantoate pocket. Beta-alanine is bound at residue glutamine 57. ATP is bound at residue 144–147 (GKKD). Residue glutamine 150 coordinates (R)-pantoate. Residues valine 173 and 181 to 184 (LSSR) contribute to the ATP site.

It belongs to the pantothenate synthetase family. As to quaternary structure, homodimer.

Its subcellular location is the cytoplasm. The enzyme catalyses (R)-pantoate + beta-alanine + ATP = (R)-pantothenate + AMP + diphosphate + H(+). The protein operates within cofactor biosynthesis; (R)-pantothenate biosynthesis; (R)-pantothenate from (R)-pantoate and beta-alanine: step 1/1. Catalyzes the condensation of pantoate with beta-alanine in an ATP-dependent reaction via a pantoyl-adenylate intermediate. The chain is Pantothenate synthetase from Burkholderia thailandensis (strain ATCC 700388 / DSM 13276 / CCUG 48851 / CIP 106301 / E264).